Reading from the N-terminus, the 372-residue chain is C-X-C chemokine receptor type 5 (372 aa).

The Extracellular segment spans residues 1-55; it reads MNYPLTLEMDLENLEDLFWELDRLDNYNDTSLVENHLCPATEGPLMASFKAVFVP. The N-linked (GlcNAc...) asparagine glycan is linked to asparagine 28. The helical transmembrane segment at 56-76 threads the bilayer; that stretch reads VAYSLIFLLGVIGNVLVLVIL. At 77–88 the chain is on the cytoplasmic side; it reads ERHRQTRSSTET. A helical membrane pass occupies residues 89–109; that stretch reads FLFHLAVADLLLVFILPFAVA. Residues 110-124 are Extracellular-facing; sequence EGSVGWVLGTFLCKT. The cysteines at positions 122 and 202 are disulfide-linked. Residues 125-145 form a helical membrane-spanning segment; it reads VIALHKVNFYCSSLLLACIAV. The Cytoplasmic segment spans residues 146-167; sequence DRYLAIVHAVHAYRHRRLLSIH. A helical transmembrane segment spans residues 168-188; sequence ITCGTIWLVGFLLALPEILFA. Topologically, residues 189–219 are extracellular; sequence KVSQGHHNNSLPRCTFSQENQAETHAWFTSR. The N-linked (GlcNAc...) asparagine glycan is linked to asparagine 196. A helical transmembrane segment spans residues 220–240; sequence FLYHVAGFLLPMLVMGWCYVG. The Cytoplasmic portion of the chain corresponds to 241 to 259; sequence VVHRLRQAQRRPQRQKAVR. Residues 260-280 form a helical membrane-spanning segment; the sequence is VAILVTSIFFLCWSPYHIVIF. The Extracellular segment spans residues 281 to 304; that stretch reads LDTLARLKAVDNTCKLNGSLPVAI. The chain crosses the membrane as a helical span at residues 305-325; that stretch reads TMCEFLGLAHCCLNPMLYTFA. At 326–372 the chain is on the cytoplasmic side; sequence GVKFRSDLSRLLTKLGCTGPASLCQLFPSWRRSSLSESENATSLTTF.

This sequence belongs to the G-protein coupled receptor 1 family. In terms of tissue distribution, expression in mature B-cells and Burkitt lymphoma cells.

Its subcellular location is the cell membrane. Its function is as follows. Cytokine receptor that binds to B-lymphocyte chemoattractant (BLC). Involved in B-cell migration into B-cell follicles of spleen and Peyer patches but not into those of mesenteric or peripheral lymph nodes. May have a regulatory function in Burkitt lymphoma (BL) lymphomagenesis and/or B-cell differentiation. This chain is C-X-C chemokine receptor type 5 (CXCR5), found in Homo sapiens (Human).